A 431-amino-acid polypeptide reads, in one-letter code: Glutamate--tRNA ligase 1 (431 aa).

The 'HIGH' region motif lies at 6-16 (PSPTGDMHIGN). Residues 235–239 (KMSKR) carry the 'KMSKS' region motif. Lys238 contacts ATP.

The protein belongs to the class-I aminoacyl-tRNA synthetase family. Glutamate--tRNA ligase type 1 subfamily. As to quaternary structure, monomer.

The protein localises to the cytoplasm. It carries out the reaction tRNA(Glu) + L-glutamate + ATP = L-glutamyl-tRNA(Glu) + AMP + diphosphate. Catalyzes the attachment of glutamate to tRNA(Glu) in a two-step reaction: glutamate is first activated by ATP to form Glu-AMP and then transferred to the acceptor end of tRNA(Glu). The polypeptide is Glutamate--tRNA ligase 1 (Nitratiruptor sp. (strain SB155-2)).